The sequence spans 423 residues: Subtilisin-like protease 2 (423 aa).

The signal sequence occupies residues 1–17; that stretch reads MQLLNLGLLLLLPFVAG. The propeptide occupies 18 to 123; that stretch reads EIAPQPEPLR…VHPDQHVYLA (106 aa). The Inhibitor I9 domain occupies 37-123; that stretch reads QYIVTLKEGL…VHPDQHVYLA (87 aa). The 292-residue stretch at 132–423 folds into the Peptidase S8 domain; it reads RWGLGYMSSK…RKFTLPKNTK (292 aa). Active-site charge relay system residues include aspartate 170 and histidine 202. N-linked (GlcNAc...) asparagine glycosylation is found at asparagine 249, asparagine 262, and asparagine 349. Serine 358 functions as the Charge relay system in the catalytic mechanism. N-linked (GlcNAc...) asparagine glycosylation occurs at asparagine 389.

This sequence belongs to the peptidase S8 family.

It is found in the secreted. Secreted subtilisin-like serine protease with keratinolytic activity that contributes to pathogenicity. The protein is Subtilisin-like protease 2 (SUB2) of Arthroderma otae (strain ATCC MYA-4605 / CBS 113480) (Microsporum canis).